Here is a 54-residue protein sequence, read N- to C-terminus: U-reduvitoxin-Pr1a (54 aa).

The signal sequence occupies residues 1 to 19 (MKLLGLLLLVFTFMALAFA). Cystine bridges form between Cys24-Cys39, Cys31-Cys44, and Cys38-Cys51.

This sequence belongs to the venom Ptu1-like knottin family. As to expression, expressed by the venom gland (posterior main gland) (at protein level).

It localises to the secreted. Functionally, binds reversibly and blocks P/Q-type voltage-gated calcium channels (Cav). This is U-reduvitoxin-Pr1a from Platymeris rhadamanthus (Red spot assassin bug).